A 184-amino-acid polypeptide reads, in one-letter code: Protein N-terminal glutamine amidohydrolase (184 aa).

Active-site residues include Cys-14, His-63, and Asp-78.

The protein belongs to the NTAQ1 family. Monomer.

It carries out the reaction N-terminal L-glutaminyl-[protein] + H2O = N-terminal L-glutamyl-[protein] + NH4(+). Functionally, mediates the side-chain deamidation of N-terminal glutamine residues to glutamate, an important step in N-end rule pathway of protein degradation. Conversion of the resulting N-terminal glutamine to glutamate renders the protein susceptible to arginylation, polyubiquitination and degradation as specified by the N-end rule. Does not act on substrates with internal or C-terminal glutamine and does not act on non-glutamine residues in any position. The sequence is that of Protein N-terminal glutamine amidohydrolase from Caenorhabditis elegans.